The sequence spans 198 residues: Probable molybdenum cofactor guanylyltransferase (198 aa).

GTP is bound by residues 11–13 (LAG), Lys23, Asp71, and Asp102. Asp102 is a binding site for Mg(2+).

It belongs to the MobA family. Mg(2+) serves as cofactor.

Its subcellular location is the cytoplasm. It carries out the reaction Mo-molybdopterin + GTP + H(+) = Mo-molybdopterin guanine dinucleotide + diphosphate. Its function is as follows. Transfers a GMP moiety from GTP to Mo-molybdopterin (Mo-MPT) cofactor (Moco or molybdenum cofactor) to form Mo-molybdopterin guanine dinucleotide (Mo-MGD) cofactor. This is Probable molybdenum cofactor guanylyltransferase from Halalkalibacterium halodurans (strain ATCC BAA-125 / DSM 18197 / FERM 7344 / JCM 9153 / C-125) (Bacillus halodurans).